The chain runs to 450 residues: Citrate/malate-proton symporter (450 aa).

The Cytoplasmic portion of the chain corresponds to 1–32 (MGELQTHMQLQTDTIHEGVRKENWFAKAMNIK). A helical membrane pass occupies residues 33-53 (VGIIPLPVYALLFILITVFVM). The Extracellular segment spans residues 54-64 (HHDVKSDILTS). A helical membrane pass occupies residues 65-85 (IAVMAFFGFTFAQIGKSIPIV). Over 86–87 (RS) the chain is Cytoplasmic. The helical transmembrane segment at 88-108 (IGGPAILATFIPSAVVYYHLL) threads the bilayer. The Extracellular segment spans residues 109–118 (PNDIVKSTTE). A helical transmembrane segment spans residues 119–139 (FTENSNFLYLFIAGIVVGSIL). Residues 140–152 (GMKRETLVKAFMK) lie on the Cytoplasmic side of the membrane. Residues 153-173 (IFIPLIVGSVTAAIVGLAVGT) traverse the membrane as a helical segment. Over 174–217 (LLGLGFQHTLLYIVIPIMAGGVGEGAIPLSIGYSDIMPISQGEA) the chain is Extracellular. A helical transmembrane segment spans residues 218–238 (FALVLPSIMLGSLCAIILAGL). The Cytoplasmic segment spans residues 239 to 273 (LNRIGKKKPEWTGNGKVDRSEEESPALEESQSGQQ). The interval 249–268 (WTGNGKVDRSEEESPALEES) is disordered. Residues 274–294 (MFNLSLFASGGILAVSLYLVG) traverse the membrane as a helical segment. Met-295 is a topological domain (extracellular). The chain crosses the membrane as a helical span at residues 296-316 (LAHDFFGFPAPVAMLLLAVLI). The Cytoplasmic segment spans residues 317 to 335 (KLFRLVPASIENGAFGVSR). A helical transmembrane segment spans residues 336–356 (FFSTAVTYPLLFAIGVSMTPW). The Extracellular portion of the chain corresponds to 357 to 364 (DKLVAAFN). Residues 365 to 385 (LSNIITILSVVVTMMAVGFFT) traverse the membrane as a helical segment. Over 386–428 (GKWLNMYPIETAIINACHSGQGGTGDVAILSAAERLELMPFAQ) the chain is Cytoplasmic. A helical transmembrane segment spans residues 429–446 (VSTRIGGAITVSLTLLLL). Residues 447–450 (HQFY) are Extracellular-facing.

The protein belongs to the 2-hydroxycarboxylate transporter (2-HCT) (TC 2.A.24) family.

The protein localises to the cell membrane. The enzyme catalyses citrate(in) + 3 H(+)(in) = citrate(out) + 3 H(+)(out). It catalyses the reaction (S)-malate(in) + 2 H(+)(in) = (S)-malate(out) + 2 H(+)(out). With respect to regulation, the uptake activity is inhibited by divalent metal ions such as Ca(2+), Mg(2+) and Ni(2+). In terms of biological role, proton motive force-driven secondary transporter that catalyzes the uptake of both citrate and malate. Is an electroneutral proton-solute symporter: the number of protons transported is equal to the valence of the transported anions. Translocates the free citrate and malate anions. Citramalate binds to the transporter, but it is not translocated. Is strictly stereoselective, recognizing only the (S)-enantiomers of malate and citramalate. This chain is Citrate/malate-proton symporter, found in Bacillus subtilis (strain 168).